A 511-amino-acid polypeptide reads, in one-letter code: ATP synthase subunit alpha (511 aa).

Position 170 to 177 (170 to 177 (GDRQTGKT)) interacts with ATP.

The protein belongs to the ATPase alpha/beta chains family. In terms of assembly, F-type ATPases have 2 components, CF(1) - the catalytic core - and CF(0) - the membrane proton channel. CF(1) has five subunits: alpha(3), beta(3), gamma(1), delta(1), epsilon(1). CF(0) has three main subunits: a(1), b(2) and c(9-12). The alpha and beta chains form an alternating ring which encloses part of the gamma chain. CF(1) is attached to CF(0) by a central stalk formed by the gamma and epsilon chains, while a peripheral stalk is formed by the delta and b chains.

Its subcellular location is the cell inner membrane. The enzyme catalyses ATP + H2O + 4 H(+)(in) = ADP + phosphate + 5 H(+)(out). Produces ATP from ADP in the presence of a proton gradient across the membrane. The alpha chain is a regulatory subunit. The protein is ATP synthase subunit alpha of Granulibacter bethesdensis (strain ATCC BAA-1260 / CGDNIH1).